We begin with the raw amino-acid sequence, 483 residues long: Altronate oxidoreductase (483 aa).

Residue 18–29 participates in NAD(+) binding; the sequence is IIQFGEGNFLRA.

This sequence belongs to the mannitol dehydrogenase family. UxaB subfamily.

It catalyses the reaction D-altronate + NAD(+) = keto-D-tagaturonate + NADH + H(+). Its pathway is carbohydrate metabolism; pentose and glucuronate interconversion. The polypeptide is Altronate oxidoreductase (Escherichia coli O17:K52:H18 (strain UMN026 / ExPEC)).